The following is a 381-amino-acid chain: MKKLKVSKMEILVRYGEIGLKSDPIRKNLEEILRKNIIKLLRKYEIDAEVKILHRKLLVKINTKDKEDLALKLLKKVAGIVSYSPVYECPLDINEIVSFAVQIMKKKLKTLNKEKVTFAVKTKRSYKKFPFTSVEVNKKVGEAIVEKLGLEVDLENPDIVLGIEILNDGAYIFTEKYEGIGGLPAGSQGKVLCLISDGIDSPVAAFMMIRRGCRAVLLHLKMSEEALNKVRKIVEVLSDYDTELEFVVYDYKKDIEDIVEKLKSIKKENYTCIFCKRKMLKVAEKYAKYLDCDAIVTGDNLGQVASQTLKNLRVISENINYPILRPLIGLDKNDIVKIAKEIGTYEISTEKEIKCPYLPKHPKTIAKPEEVKKIKEKVKLV.

A THUMP domain is found at 68-176; it reads DLALKLLKKV…NDGAYIFTEK (109 aa). ATP contacts are provided by residues 194 to 195, lysine 276, glycine 298, and glutamine 307; that span reads LI.

The protein belongs to the ThiI family.

It localises to the cytoplasm. It catalyses the reaction [ThiI sulfur-carrier protein]-S-sulfanyl-L-cysteine + a uridine in tRNA + 2 reduced [2Fe-2S]-[ferredoxin] + ATP + H(+) = [ThiI sulfur-carrier protein]-L-cysteine + a 4-thiouridine in tRNA + 2 oxidized [2Fe-2S]-[ferredoxin] + AMP + diphosphate. The catalysed reaction is [ThiS sulfur-carrier protein]-C-terminal Gly-Gly-AMP + S-sulfanyl-L-cysteinyl-[cysteine desulfurase] + AH2 = [ThiS sulfur-carrier protein]-C-terminal-Gly-aminoethanethioate + L-cysteinyl-[cysteine desulfurase] + A + AMP + 2 H(+). The protein operates within cofactor biosynthesis; thiamine diphosphate biosynthesis. Catalyzes the ATP-dependent transfer of a sulfur to tRNA to produce 4-thiouridine in position 8 of tRNAs, which functions as a near-UV photosensor. Also catalyzes the transfer of sulfur to the sulfur carrier protein ThiS, forming ThiS-thiocarboxylate. This is a step in the synthesis of thiazole, in the thiamine biosynthesis pathway. The sulfur is donated as persulfide by IscS. The protein is Probable tRNA sulfurtransferase of Methanocaldococcus jannaschii (strain ATCC 43067 / DSM 2661 / JAL-1 / JCM 10045 / NBRC 100440) (Methanococcus jannaschii).